The primary structure comprises 196 residues: Proteasome subunit beta 1 (196 aa).

Residues 1 to 6 (MEKKTG) constitute a propeptide, removed in mature form; by autocatalysis. Thr-7 serves as the catalytic Nucleophile.

It belongs to the peptidase T1B family. The 20S proteasome core is composed of 14 alpha and 14 beta subunits that assemble into four stacked heptameric rings, resulting in a barrel-shaped structure. The two inner rings, each composed of seven catalytic beta subunits, are sandwiched by two outer rings, each composed of seven alpha subunits. The catalytic chamber with the active sites is on the inside of the barrel. Has a gated structure, the ends of the cylinder being occluded by the N-termini of the alpha-subunits. Is capped at one or both ends by the proteasome regulatory ATPase, PAN.

Its subcellular location is the cytoplasm. The enzyme catalyses Cleavage of peptide bonds with very broad specificity.. With respect to regulation, the formation of the proteasomal ATPase PAN-20S proteasome complex, via the docking of the C-termini of PAN into the intersubunit pockets in the alpha-rings, triggers opening of the gate for substrate entry. Interconversion between the open-gate and close-gate conformations leads to a dynamic regulation of the 20S proteasome proteolysis activity. Its function is as follows. Component of the proteasome core, a large protease complex with broad specificity involved in protein degradation. The protein is Proteasome subunit beta 1 of Pyrococcus furiosus (strain ATCC 43587 / DSM 3638 / JCM 8422 / Vc1).